The primary structure comprises 392 residues: MWTALVLVWISSVLLPRSHMMSAEPRNIVTNKWPKAVNQSMLRDTVPRTDNTFTERTAIVPPAPVTLTTETWAATLNSTRVTAEVTTHGTNTSTPTTREGTTDRVTSRTLAVPTSSGPSSAEQTRPTTIAGLPSLSTPHAEVPRTNASVSPRTAMAATVAPHTATLAAGTVNTSDPHTRTPSPAKSTPTDTSSKNPIPTSGAQIQGTTVQLTTDQPVHSTAGRSALSPSNATLEPTTTQVQTKEPSASTVPARATSLSPDVDVISPTTQPSPTLPTQGTGGPGTLLTTEQVGTKTTSGTASAGPTSRSSGDIKVPTTDSCQPSTQGQYLVTIDALTPSLVNKMLLLVVLLVGVTLFIAVLVMFALQAYESYKKKDYTQVDYLINGMYADSEM.

The N-terminal stretch at 1–23 (MWTALVLVWISSVLLPRSHMMSA) is a signal peptide. Residues 24–342 (EPRNIVTNKW…DALTPSLVNK (319 aa)) lie on the Extracellular side of the membrane. An N-linked (GlcNAc...) asparagine glycan is attached at Asn77. Disordered regions lie at residues 83 to 154 (AEVT…PRTA) and 167 to 320 (AAGT…TDSC). The span at 86-97 (TTHGTNTSTPTT) shows a compositional bias: low complexity. 2 stretches are compositionally biased toward polar residues: residues 107-127 (SRTL…TRPT) and 170-249 (TVNT…SAST). A glycan (N-linked (GlcNAc...) asparagine) is linked at Asn172. Composition is skewed to low complexity over residues 265-277 (SPTT…LPTQ) and 284-309 (TLLT…SRSS). A helical membrane pass occupies residues 343–363 (MLLLVVLLVGVTLFIAVLVMF). Topologically, residues 364 to 392 (ALQAYESYKKKDYTQVDYLINGMYADSEM) are cytoplasmic.

The protein resides in the cell membrane. It localises to the golgi apparatus. The protein localises to the trans-Golgi network membrane. This is an uncharacterized protein from Mus musculus (Mouse).